The sequence spans 244 residues: tRNA pseudouridine synthase A (244 aa).

The active-site Nucleophile is Asp52. Substrate is bound at residue Tyr110.

Belongs to the tRNA pseudouridine synthase TruA family. In terms of assembly, homodimer.

It catalyses the reaction uridine(38/39/40) in tRNA = pseudouridine(38/39/40) in tRNA. In terms of biological role, formation of pseudouridine at positions 38, 39 and 40 in the anticodon stem and loop of transfer RNAs. The polypeptide is tRNA pseudouridine synthase A (Clostridium acetobutylicum (strain ATCC 824 / DSM 792 / JCM 1419 / IAM 19013 / LMG 5710 / NBRC 13948 / NRRL B-527 / VKM B-1787 / 2291 / W)).